The sequence spans 181 residues: MALEIPKIEAILRGIAILLLVSTACLVGLDSQTKFVIVYEKEVTYKDLHALVVLVYVDAVAAAYNLLQLCRCSVSALSKGNFKGSYRYLSWACFVLDQLAAYTTFAAHSAALQHSVLGITGAKVFQWMKWCNRFTRFCFQIGGALTCGYIASVLMVMISFISAFNLFRLYSPKHFLRLKGT.

The Cytoplasmic portion of the chain corresponds to 1–7 (MALEIPK). The helical transmembrane segment at 8–28 (IEAILRGIAILLLVSTACLVG) threads the bilayer. Over 29 to 49 (LDSQTKFVIVYEKEVTYKDLH) the chain is Extracellular. Residues 50-70 (ALVVLVYVDAVAAAYNLLQLC) form a helical membrane-spanning segment. Residues 71 to 98 (RCSVSALSKGNFKGSYRYLSWACFVLDQ) are Cytoplasmic-facing. Residues 99 to 119 (LAAYTTFAAHSAALQHSVLGI) form a helical membrane-spanning segment. At 120 to 140 (TGAKVFQWMKWCNRFTRFCFQ) the chain is on the extracellular side. A helical membrane pass occupies residues 141–161 (IGGALTCGYIASVLMVMISFI). Residues 162 to 181 (SAFNLFRLYSPKHFLRLKGT) lie on the Cytoplasmic side of the membrane.

It belongs to the Casparian strip membrane proteins (CASP) family. As to quaternary structure, homodimer and heterodimers.

The protein localises to the cell membrane. The polypeptide is CASP-like protein 2C1 (Populus trichocarpa (Western balsam poplar)).